The chain runs to 173 residues: Endoribonuclease YbeY (173 aa).

Zn(2+)-binding residues include His126, His130, and His136.

The protein belongs to the endoribonuclease YbeY family. Requires Zn(2+) as cofactor.

The protein localises to the cytoplasm. Its function is as follows. Single strand-specific metallo-endoribonuclease involved in late-stage 70S ribosome quality control and in maturation of the 3' terminus of the 16S rRNA. The sequence is that of Endoribonuclease YbeY from Sinorhizobium fredii (strain NBRC 101917 / NGR234).